The primary structure comprises 183 residues: ATP synthase subunit b, chloroplastic (183 aa).

The chain crosses the membrane as a helical span at residues 33 to 51 (IINLSVVIGVVVSFGGDAL).

It belongs to the ATPase B chain family. F-type ATPases have 2 components, F(1) - the catalytic core - and F(0) - the membrane proton channel. F(1) has five subunits: alpha(3), beta(3), gamma(1), delta(1), epsilon(1). F(0) has four main subunits: a(1), b(1), b'(1) and c(10-14). The alpha and beta chains form an alternating ring which encloses part of the gamma chain. F(1) is attached to F(0) by a central stalk formed by the gamma and epsilon chains, while a peripheral stalk is formed by the delta, b and b' chains.

The protein localises to the plastid. Its subcellular location is the chloroplast thylakoid membrane. In terms of biological role, f(1)F(0) ATP synthase produces ATP from ADP in the presence of a proton or sodium gradient. F-type ATPases consist of two structural domains, F(1) containing the extramembraneous catalytic core and F(0) containing the membrane proton channel, linked together by a central stalk and a peripheral stalk. During catalysis, ATP synthesis in the catalytic domain of F(1) is coupled via a rotary mechanism of the central stalk subunits to proton translocation. Its function is as follows. Component of the F(0) channel, it forms part of the peripheral stalk, linking F(1) to F(0). In Oltmannsiellopsis viridis (Marine flagellate), this protein is ATP synthase subunit b, chloroplastic.